We begin with the raw amino-acid sequence, 502 residues long: Ubiquitin-associated protein 1 (502 aa).

An interaction with ESCRT-I region spans residues 1–95; the sequence is MASKKLGTDV…AEAKVNSKSG (95 aa). In terms of domain architecture, UMA spans 17–63; it reads LDDVPFKIGDKFKTPAKVGLPIGFSLPDCLQVVREMQYDFSLEKKTI. Basic and acidic residues predominate over residues 80-100; that stretch reads ERKAEEAEAKVNSKSGPEGDS. Disordered regions lie at residues 80–117 and 135–156; these read ERKAEEAEAKVNSKSGPEGDSKVSFPKTHNTATMPPPI and VSSSATKQKVLSPPHTKADFNP. A phosphoserine mark is found at Ser-146, Ser-205, and Ser-289. The interval 260-290 is interaction with PTPN23; that stretch reads VSNIKSLSFPKLDSDDSNQKTVKLASTFHST. UBA domains are found at residues 389–430 and 451–498; these read SPSE…LFAH and QCSE…LMAR.

As to quaternary structure, component of an ESCRT-I complex (endosomal sorting complex required for transport I) which consists of TSG101, VPS28, VPS37A and UBAP1 in a 1:1:1:1 stoichiometry. Interacts with PTPN23. Interacts (via UBA domains) with ubiquitinated proteins. In terms of tissue distribution, ubiquitous. Highly expressed in heart, liver, brain, kidney, spleen, skeletal muscle, stomach, testis and lung.

The protein resides in the cytoplasm. It is found in the cytosol. Its subcellular location is the endosome. Component of the ESCRT-I complex, a regulator of vesicular trafficking process. Binds to ubiquitinated cargo proteins and is required for the sorting of endocytic ubiquitinated cargos into multivesicular bodies (MVBs). Plays a role in the proteasomal degradation of ubiquitinated cell-surface proteins, such as EGFR and BST2. This is Ubiquitin-associated protein 1 from Mus musculus (Mouse).